The primary structure comprises 201 residues: Small ribosomal subunit protein uS5 (201 aa).

Residues 1 to 28 (MARGEQQRGEGGQRRDRRDRNAPEERVD) form a disordered region. An S5 DRBM domain is found at 31–94 (IVEKLVHINR…EEAKKTMIRV (64 aa)). Residues 173–201 (QIAAKRGKKVGDILGRRADGASAPEAIEG) form a disordered region. A compositionally biased stretch (basic and acidic residues) spans 181 to 191 (KVGDILGRRAD).

Belongs to the universal ribosomal protein uS5 family. As to quaternary structure, part of the 30S ribosomal subunit. Contacts proteins S4 and S8.

In terms of biological role, with S4 and S12 plays an important role in translational accuracy. Its function is as follows. Located at the back of the 30S subunit body where it stabilizes the conformation of the head with respect to the body. In Caulobacter vibrioides (strain ATCC 19089 / CIP 103742 / CB 15) (Caulobacter crescentus), this protein is Small ribosomal subunit protein uS5.